A 258-amino-acid polypeptide reads, in one-letter code: Probable parvulin-type peptidyl-prolyl cis-trans isomerase (258 aa).

An N-terminal signal peptide occupies residues 1–19 (MKRIAMLAAACVIAVPAFA). In terms of domain architecture, PpiC spans 127–219 (KMEYKVRHIL…FGWHVIQVDD (93 aa)).

This sequence belongs to the PpiC/parvulin rotamase family.

It catalyses the reaction [protein]-peptidylproline (omega=180) = [protein]-peptidylproline (omega=0). This is Probable parvulin-type peptidyl-prolyl cis-trans isomerase from Bordetella parapertussis (strain 12822 / ATCC BAA-587 / NCTC 13253).